Here is a 408-residue protein sequence, read N- to C-terminus: Flavohemoprotein (408 aa).

The Globin domain occupies 1-138; it reads MLSEKTIRIV…LADIFIGREG (138 aa). H85 serves as a coordination point for heme b. Residues Y95 and E137 each act as charge relay system in the active site. The segment at 149–408 is reductase; sequence GGWNGTRTFV…FGPKEELVAV (260 aa). Residues 152–263 form the FAD-binding FR-type domain; it reads NGTRTFVVTK…GPPCGEFTVD (112 aa). FAD contacts are provided by residues Y190 and 205-208; that span reads RNYS. NADP(+) is bound at residue 277-282; sequence GIGVTP. Residue 398–401 coordinates FAD; sequence FFGP.

The protein belongs to the globin family. Two-domain flavohemoproteins subfamily. It in the C-terminal section; belongs to the flavoprotein pyridine nucleotide cytochrome reductase family. It depends on heme b as a cofactor. The cofactor is FAD.

The catalysed reaction is 2 nitric oxide + NADPH + 2 O2 = 2 nitrate + NADP(+) + H(+). The enzyme catalyses 2 nitric oxide + NADH + 2 O2 = 2 nitrate + NAD(+) + H(+). The protein is Flavohemoprotein of Rhodopirellula baltica (strain DSM 10527 / NCIMB 13988 / SH1).